The following is a 209-amino-acid chain: Thiamine-phosphate synthase (209 aa).

4-amino-2-methyl-5-(diphosphooxymethyl)pyrimidine is bound by residues 37 to 41 and N69; that span reads QLREK. D70 and D89 together coordinate Mg(2+). S108 is a binding site for 4-amino-2-methyl-5-(diphosphooxymethyl)pyrimidine. 134–136 is a 2-[(2R,5Z)-2-carboxy-4-methylthiazol-5(2H)-ylidene]ethyl phosphate binding site; the sequence is TNT. A 4-amino-2-methyl-5-(diphosphooxymethyl)pyrimidine-binding site is contributed by K137. 2-[(2R,5Z)-2-carboxy-4-methylthiazol-5(2H)-ylidene]ethyl phosphate-binding positions include G164 and 184-185; that span reads VS.

This sequence belongs to the thiamine-phosphate synthase family. The cofactor is Mg(2+).

The catalysed reaction is 2-[(2R,5Z)-2-carboxy-4-methylthiazol-5(2H)-ylidene]ethyl phosphate + 4-amino-2-methyl-5-(diphosphooxymethyl)pyrimidine + 2 H(+) = thiamine phosphate + CO2 + diphosphate. The enzyme catalyses 2-(2-carboxy-4-methylthiazol-5-yl)ethyl phosphate + 4-amino-2-methyl-5-(diphosphooxymethyl)pyrimidine + 2 H(+) = thiamine phosphate + CO2 + diphosphate. It carries out the reaction 4-methyl-5-(2-phosphooxyethyl)-thiazole + 4-amino-2-methyl-5-(diphosphooxymethyl)pyrimidine + H(+) = thiamine phosphate + diphosphate. It participates in cofactor biosynthesis; thiamine diphosphate biosynthesis; thiamine phosphate from 4-amino-2-methyl-5-diphosphomethylpyrimidine and 4-methyl-5-(2-phosphoethyl)-thiazole: step 1/1. In terms of biological role, condenses 4-methyl-5-(beta-hydroxyethyl)thiazole monophosphate (THZ-P) and 2-methyl-4-amino-5-hydroxymethyl pyrimidine pyrophosphate (HMP-PP) to form thiamine monophosphate (TMP). The sequence is that of Thiamine-phosphate synthase from Methanobrevibacter smithii (strain ATCC 35061 / DSM 861 / OCM 144 / PS).